We begin with the raw amino-acid sequence, 397 residues long: Argininosuccinate synthase (397 aa).

Residue 7–15 coordinates ATP; that stretch reads LYSGGLDTS. Tyrosine 83 contributes to the L-citrulline binding site. An ATP-binding site is contributed by glycine 113. L-aspartate contacts are provided by threonine 115, asparagine 119, and aspartate 120. Asparagine 119 is a binding site for L-citrulline. Residues arginine 123, serine 169, serine 178, glutamate 253, and tyrosine 265 each coordinate L-citrulline.

The protein belongs to the argininosuccinate synthase family. Type 1 subfamily. In terms of assembly, homotetramer.

The protein localises to the cytoplasm. It carries out the reaction L-citrulline + L-aspartate + ATP = 2-(N(omega)-L-arginino)succinate + AMP + diphosphate + H(+). The protein operates within amino-acid biosynthesis; L-arginine biosynthesis; L-arginine from L-ornithine and carbamoyl phosphate: step 2/3. The polypeptide is Argininosuccinate synthase (Thermoplasma volcanium (strain ATCC 51530 / DSM 4299 / JCM 9571 / NBRC 15438 / GSS1)).